Reading from the N-terminus, the 500-residue chain is UDP-N-acetylmuramoyl-L-alanyl-D-glutamate--2,6-diaminopimelate ligase (500 aa).

Residues Leu26, Ser28, and 43 to 45 each bind UDP-N-acetyl-alpha-D-muramoyl-L-alanyl-D-glutamate; that span reads HQV. Position 123–129 (123–129) interacts with ATP; the sequence is GTNGKTT. UDP-N-acetyl-alpha-D-muramoyl-L-alanyl-D-glutamate contacts are provided by residues Asn164, 165 to 166, Ser192, Gln198, and Arg200; that span reads TT. Lys232 bears the N6-carboxylysine mark. Meso-2,6-diaminopimelate is bound by residues Arg399, 423–426, Gly474, and Glu478; that span reads DNPR. A Meso-diaminopimelate recognition motif motif is present at residues 423 to 426; that stretch reads DNPR.

The protein belongs to the MurCDEF family. MurE subfamily. The cofactor is Mg(2+). In terms of processing, carboxylation is probably crucial for Mg(2+) binding and, consequently, for the gamma-phosphate positioning of ATP.

It is found in the cytoplasm. It carries out the reaction UDP-N-acetyl-alpha-D-muramoyl-L-alanyl-D-glutamate + meso-2,6-diaminopimelate + ATP = UDP-N-acetyl-alpha-D-muramoyl-L-alanyl-gamma-D-glutamyl-meso-2,6-diaminopimelate + ADP + phosphate + H(+). The protein operates within cell wall biogenesis; peptidoglycan biosynthesis. Its function is as follows. Catalyzes the addition of meso-diaminopimelic acid to the nucleotide precursor UDP-N-acetylmuramoyl-L-alanyl-D-glutamate (UMAG) in the biosynthesis of bacterial cell-wall peptidoglycan. This is UDP-N-acetylmuramoyl-L-alanyl-D-glutamate--2,6-diaminopimelate ligase from Actinobacillus pleuropneumoniae serotype 5b (strain L20).